We begin with the raw amino-acid sequence, 340 residues long: GTP-binding protein REM 2 (340 aa).

Positions 1-13 (MHTDLDTDMDMDT) are enriched in acidic residues. Residues 1 to 107 (MHTDLDTDMD…SDSLGSGEAA (107 aa)) are disordered. Ser-27 carries the phosphoserine modification. Basic and acidic residues predominate over residues 40 to 53 (LLKKSEKLLAELDR). Residues 93 to 104 (SSSGSSDSLGSG) are compositionally biased toward low complexity. GTP-binding positions include 121 to 128 (GESGVGKS), 229 to 232 (NKSD), and 260 to 261 (AA). The segment at 283–308 (RNHAGGQRPDPGSPEGPAPPARRESL) is disordered. A compositionally biased stretch (pro residues) spans 293–302 (PGSPEGPAPP). Phosphoserine is present on Ser-295.

The protein belongs to the small GTPase superfamily. RGK family.

It localises to the cell membrane. Functionally, binds GTP saturably and exhibits a low intrinsic rate of GTP hydrolysis. The polypeptide is GTP-binding protein REM 2 (REM2) (Homo sapiens (Human)).